A 205-amino-acid polypeptide reads, in one-letter code: dTTP/UTP pyrophosphatase (205 aa).

Aspartate 71 (proton acceptor) is an active-site residue.

It belongs to the Maf family. YhdE subfamily. A divalent metal cation serves as cofactor.

It localises to the cytoplasm. It catalyses the reaction dTTP + H2O = dTMP + diphosphate + H(+). It carries out the reaction UTP + H2O = UMP + diphosphate + H(+). Functionally, nucleoside triphosphate pyrophosphatase that hydrolyzes dTTP and UTP. May have a dual role in cell division arrest and in preventing the incorporation of modified nucleotides into cellular nucleic acids. The polypeptide is dTTP/UTP pyrophosphatase (Syntrophus aciditrophicus (strain SB)).